Here is a 22-residue protein sequence, read N- to C-terminus: Heat shock 70-related protein 1, mitochondrial (22 aa).

Belongs to the heat shock protein 70 family.

It localises to the mitochondrion. The sequence is that of Heat shock 70-related protein 1, mitochondrial from Leishmania tarentolae (Sauroleishmania tarentolae).